We begin with the raw amino-acid sequence, 294 residues long: Small ribosomal subunit protein uS2 (294 aa).

Positions 254-294 (ESSNTEAPVAETAAAEAPVADAAIEAPVAEEAKTTEADDTK) are disordered. The segment covering 259–282 (EAPVAETAAAEAPVADAAIEAPVA) has biased composition (low complexity). A compositionally biased stretch (basic and acidic residues) spans 283-294 (EEAKTTEADDTK).

Belongs to the universal ribosomal protein uS2 family.

The sequence is that of Small ribosomal subunit protein uS2 from Renibacterium salmoninarum (strain ATCC 33209 / DSM 20767 / JCM 11484 / NBRC 15589 / NCIMB 2235).